The sequence spans 256 residues: Protein CC2D2B homolog (256 aa).

The tract at residues 1-24 is disordered; that stretch reads MSEEMDNVTAEEITDKHLQKDLDA. Positions 13–22 are enriched in basic and acidic residues; it reads ITDKHLQKDL. Coiled coils occupy residues 136 to 159 and 194 to 214; these read DLLK…KANI and EIYK…EEGK.

This Macaca fascicularis (Crab-eating macaque) protein is Protein CC2D2B homolog.